Here is a 294-residue protein sequence, read N- to C-terminus: Cell division control protein 2 homolog 2 (294 aa).

The region spanning 4–287 (YEKVEKIGEG…ARGALEHEYF (284 aa)) is the Protein kinase domain. ATP-binding positions include 10-18 (IGEGTYGVV) and lysine 33. Threonine 14 carries the phosphothreonine modification. At tyrosine 15 the chain carries Phosphotyrosine. The Proton acceptor role is filled by aspartate 127. Position 161 is a phosphothreonine; by CAK (threonine 161).

The protein belongs to the protein kinase superfamily. CMGC Ser/Thr protein kinase family. CDC2/CDKX subfamily. Found in most organs including root, young leaf, stem, vegetative meristem and flower bud.

The catalysed reaction is L-seryl-[protein] + ATP = O-phospho-L-seryl-[protein] + ADP + H(+). It carries out the reaction L-threonyl-[protein] + ATP = O-phospho-L-threonyl-[protein] + ADP + H(+). With respect to regulation, phosphorylation at Thr-14 or Tyr-15 inactivates the enzyme, while phosphorylation at Thr-161 activates it. Plays a key role in the control of the eukaryotic cell cycle. Component of the kinase complex that phosphorylates the repetitive C-terminus of RNA polymerase II. The chain is Cell division control protein 2 homolog 2 (CDC2B) from Medicago sativa (Alfalfa).